The chain runs to 63 residues: Small ribosomal subunit protein eS27 (63 aa).

Cys18, Cys21, Cys37, and Cys40 together coordinate Zn(2+). Residues 18–40 (CIDCGNEQIVFSHPATKVRCLIC) form a C4-type zinc finger.

This sequence belongs to the eukaryotic ribosomal protein eS27 family. In terms of assembly, part of the 30S ribosomal subunit. The cofactor is Zn(2+).

The chain is Small ribosomal subunit protein eS27 from Pyrococcus furiosus (strain ATCC 43587 / DSM 3638 / JCM 8422 / Vc1).